A 135-amino-acid polypeptide reads, in one-letter code: Interleukin-4 (135 aa).

The signal sequence occupies residues 1 to 24; the sequence is MGLTYQLIPVLVCLLVCTSHLVHG. Cystine bridges form between Cys27/Cys135, Cys48/Cys85, and Cys70/Cys105. Residue Asn62 is glycosylated (N-linked (GlcNAc...) asparagine).

The protein belongs to the IL-4/IL-13 family.

Its subcellular location is the secreted. Its function is as follows. Participates in at least several B-cell activation processes as well as of other cell types. It is a costimulator of DNA-synthesis. It induces the expression of class II MHC molecules on resting B-cells. It enhances both secretion and cell surface expression of IgE and IgG1. It also regulates the expression of the low affinity Fc receptor for IgE (CD23) on both lymphocytes and monocytes. Positively regulates IL31RA expression in macrophages. Stimulates autophagy in dendritic cells by interfering with mTORC1 signaling and through the induction of RUFY4. This is Interleukin-4 (IL4) from Bubalus bubalis (Domestic water buffalo).